Here is a 288-residue protein sequence, read N- to C-terminus: 4-hydroxy-tetrahydrodipicolinate synthase (288 aa).

A pyruvate-binding site is contributed by Thr-43. Residue Tyr-131 is the Proton donor/acceptor of the active site. The active-site Schiff-base intermediate with substrate is Lys-160. Ile-200 is a binding site for pyruvate.

It belongs to the DapA family. As to quaternary structure, homotetramer; dimer of dimers.

Its subcellular location is the cytoplasm. The enzyme catalyses L-aspartate 4-semialdehyde + pyruvate = (2S,4S)-4-hydroxy-2,3,4,5-tetrahydrodipicolinate + H2O + H(+). It participates in amino-acid biosynthesis; L-lysine biosynthesis via DAP pathway; (S)-tetrahydrodipicolinate from L-aspartate: step 3/4. Its function is as follows. Catalyzes the condensation of (S)-aspartate-beta-semialdehyde [(S)-ASA] and pyruvate to 4-hydroxy-tetrahydrodipicolinate (HTPA). The protein is 4-hydroxy-tetrahydrodipicolinate synthase of Methanococcus aeolicus (strain ATCC BAA-1280 / DSM 17508 / OCM 812 / Nankai-3).